Here is a 125-residue protein sequence, read N- to C-terminus: Prefoldin subunit beta (125 aa).

It belongs to the prefoldin subunit beta family. Heterohexamer of two alpha and four beta subunits.

It localises to the cytoplasm. Its function is as follows. Molecular chaperone capable of stabilizing a range of proteins. Seems to fulfill an ATP-independent, HSP70-like function in archaeal de novo protein folding. The polypeptide is Prefoldin subunit beta (Sulfolobus acidocaldarius (strain ATCC 33909 / DSM 639 / JCM 8929 / NBRC 15157 / NCIMB 11770)).